An 852-amino-acid polypeptide reads, in one-letter code: Pentatricopeptide repeat-containing protein At5g02830, chloroplastic (852 aa).

The transit peptide at M1–Y25 directs the protein to the chloroplast. The tract at residues P17–S60 is disordered. Residues L44 to S58 show a composition bias toward low complexity. PPR repeat units lie at residues D334–M364, D373–P407, N408–P442, N443–E477, T525–P557, N558–P592, D593–P627, and N628–P665.

This sequence belongs to the PPR family. P subfamily.

The protein localises to the plastid. It is found in the chloroplast. This is Pentatricopeptide repeat-containing protein At5g02830, chloroplastic from Arabidopsis thaliana (Mouse-ear cress).